We begin with the raw amino-acid sequence, 698 residues long: Polyphosphate kinase (698 aa).

Asparagine 63 is a binding site for ATP. 2 residues coordinate Mg(2+): arginine 390 and arginine 420. The active-site Phosphohistidine intermediate is histidine 450. 3 residues coordinate ATP: tyrosine 483, arginine 579, and histidine 607.

This sequence belongs to the polyphosphate kinase 1 (PPK1) family. It depends on Mg(2+) as a cofactor. In terms of processing, an intermediate of this reaction is the autophosphorylated ppk in which a phosphate is covalently linked to a histidine residue through a N-P bond.

The catalysed reaction is [phosphate](n) + ATP = [phosphate](n+1) + ADP. Catalyzes the reversible transfer of the terminal phosphate of ATP to form a long-chain polyphosphate (polyP). The chain is Polyphosphate kinase from Xylella fastidiosa (strain Temecula1 / ATCC 700964).